Consider the following 174-residue polypeptide: Ribosome rescue factor SmrB (174 aa).

Residues 96-171 (LDLHGMNQQQ…GDSAILVLLD (76 aa)) enclose the Smr domain.

This sequence belongs to the SmrB family. Associates with collided ribosomes, but not with correctly translating polysomes.

Its function is as follows. Acts as a ribosome collision sensor. Detects stalled/collided disomes (pairs of ribosomes where the leading ribosome is stalled and a second ribosome has collided with it) and endonucleolytically cleaves mRNA at the 5' boundary of the stalled ribosome. Stalled/collided disomes form a new interface (primarily via the 30S subunits) that binds SmrB. Cleaved mRNA becomes available for tmRNA ligation, leading to ribosomal subunit dissociation and rescue of stalled ribosomes. The polypeptide is Ribosome rescue factor SmrB (Aeromonas hydrophila subsp. hydrophila (strain ATCC 7966 / DSM 30187 / BCRC 13018 / CCUG 14551 / JCM 1027 / KCTC 2358 / NCIMB 9240 / NCTC 8049)).